The following is a 258-amino-acid chain: Tetraspanin-15 (258 aa).

The Cytoplasmic segment spans residues 1 to 20 (MGALGDSAYGARGRLIKFSY). A helical membrane pass occupies residues 21-41 (IVTALISILFSISCICYGIWL). Topologically, residues 42 to 62 (LARRSQYAELVSPSLYVDVGR) are extracellular. The helical transmembrane segment at 63-83 (ILVIISILSILNYLICFYAIF) threads the bilayer. The Cytoplasmic portion of the chain corresponds to 84 to 93 (KEMRCFVTSC). Residues 94 to 114 (AVASIVIAVMLIIGGCIGLNF) traverse the membrane as a helical segment. At 115–223 (RDQLTHYTPL…STCYEPLQND (109 aa)) the chain is on the extracellular side. The helical transmembrane segment at 224–244 (LLHVMNVASWLCITNAIVQII) threads the bilayer. Topologically, residues 245–258 (PSVAGCWYSKLIRK) are cytoplasmic.

Belongs to the tetraspanin (TM4SF) family. In terms of assembly, interacts with doxa-1 and bli-3. As to expression, expressed in the body wall (hyp7 hypodermal syncitium), pharynx and vulva. Expressed in a punctate pattern along the thick region of the hypodermis.

It is found in the membrane. Its function is as follows. Plays a role in cuticle biogenesis. In complex with doxa-1 and the dual oxidase bli-3, promotes the generation of reactive oxygen species (ROS) and tyrosine cross-linking of collagen, thus stabilizing cuticular extracellular matrix. The chain is Tetraspanin-15 from Caenorhabditis elegans.